A 202-amino-acid polypeptide reads, in one-letter code: Ribonuclease HII (202 aa).

Positions 12–201 (LLIAGVDEAG…VRQLKLFIPE (190 aa)) constitute an RNase H type-2 domain. A divalent metal cation contacts are provided by Asp-18, Glu-19, and Asp-110.

The protein belongs to the RNase HII family. Requires Mn(2+) as cofactor. It depends on Mg(2+) as a cofactor.

It is found in the cytoplasm. The enzyme catalyses Endonucleolytic cleavage to 5'-phosphomonoester.. In terms of biological role, endonuclease that specifically degrades the RNA of RNA-DNA hybrids. This is Ribonuclease HII from Coxiella burnetii (strain CbuK_Q154) (Coxiella burnetii (strain Q154)).